The chain runs to 295 residues: Protoheme IX farnesyltransferase (295 aa).

A run of 9 helical transmembrane segments spans residues 24-43 (IMYL…PGSI), 47-69 (LALI…NMWY), 94-114 (SALE…AIAV), 117-137 (ISAI…TIWL), 144-164 (NIVI…AVVT), 171-191 (GFVL…ALSL), 216-236 (KYIL…ALFL), 241-261 (FYLG…VSIM), and 272-292 (MFSY…LCSI).

This sequence belongs to the UbiA prenyltransferase family. Protoheme IX farnesyltransferase subfamily.

The protein localises to the cell membrane. The enzyme catalyses heme b + (2E,6E)-farnesyl diphosphate + H2O = Fe(II)-heme o + diphosphate. Its pathway is porphyrin-containing compound metabolism; heme O biosynthesis; heme O from protoheme: step 1/1. In terms of biological role, converts heme B (protoheme IX) to heme O by substitution of the vinyl group on carbon 2 of heme B porphyrin ring with a hydroxyethyl farnesyl side group. This is Protoheme IX farnesyltransferase from Wolbachia sp. subsp. Brugia malayi (strain TRS).